Here is a 617-residue protein sequence, read N- to C-terminus: Formin-binding protein 1 (617 aa).

The segment at 1-79 is required for self-association and induction of membrane tubulation; the sequence is MSWGTELWDQ…CKAFISNLNE (79 aa). Positions 1-264 constitute an F-BAR domain; that stretch reads MSWGTELWDQ…AAESIDQKND (264 aa). Positions 1 to 335 are interaction with microtubules; sequence MSWGTELWDQ…KKNKLMSLLT (335 aa). Residues Lys-66 and Lys-110 each carry the N6-acetyllysine modification. Positions 67–259 form a coiled coil; sequence YTSCKAFISN…DGIVKAAESI (193 aa). Residues 251–617 form a required for self-association and induction of membrane tubulation region; it reads GIVKAAESID…VCLDKNAKDS (367 aa). Disordered regions lie at residues 280-315 and 333-366; these read GDIE…KFGG and LLTS…QKEP. Phosphoserine is present on residues Ser-296 and Ser-299. A compositionally biased stretch (pro residues) spans 338–347; the sequence is HQPPPPPPAS. Residues Ser-349 and Ser-359 each carry the phosphoserine modification. Positions 398–490 form a coiled coil; that stretch reads TPEDFSNLPP…EVEGRLPARS (93 aa). Residues 400-552 are interaction with RND2; that stretch reads EDFSNLPPEQ…FDDEEPLPAI (153 aa). The REM-1 domain maps to 404–481; that stretch reads NLPPEQRRKK…TQKFEAWLAE (78 aa). The interval 486-531 is disordered; sequence LPARSEQARRQSGLYDSQNPPTVNNCAQDRESPDGSYTEEQSQESE. The interaction with PDE6G stretch occupies residues 495-617; sequence RQSGLYDSQN…VCLDKNAKDS (123 aa). A Phosphoserine modification is found at Ser-497. Over residues 499 to 512 the composition is skewed to polar residues; sequence LYDSQNPPTVNNCA. Tyr-500 carries the phosphotyrosine modification. The interval 514–617 is required for interaction with TNKS; it reads DRESPDGSYT…VCLDKNAKDS (104 aa). Ser-521 is modified (phosphoserine). Residues 535–617 are interaction with DNM1 and DNM3; that stretch reads LATDFDDEFD…VCLDKNAKDS (83 aa). In terms of domain architecture, SH3 spans 550–611; the sequence is PAIGTCKALY…PTSYVEVCLD (62 aa). Positions 550–617 are interaction with ARHGAP17, DAAM1, DIAPH1 and DIAPH2; sequence PAIGTCKALY…VCLDKNAKDS (68 aa). An interaction with DNM2 and WASL region spans residues 553–609; the sequence is GTCKALYTFEGQNEGTISVVEGETLYVIEEDKGDGWTRIRRNEDEEGYVPTSYVEVC. Residues 553–610 form an interaction with FASLG region; that stretch reads GTCKALYTFEGQNEGTISVVEGETLYVIEEDKGDGWTRIRRNEDEEGYVPTSYVEVCL.

It belongs to the FNBP1 family. In terms of assembly, interacts specifically with GTP-bound RND2 and CDC42. Interacts with PDE6G and microtubules. Homodimerizes, the dimers can polymerize end-to-end to form filamentous structures. Interacts with AKAP9, ARHGAP17, DAAM1, DIAPH1, DIAPH2, DNM1, DNM2, DNM3, FASLG/FASL, SNX2 and WASL/N-WASP. May interact with TNKS. As to expression, very highly expressed in the epithelial cells of the gastrointestinal tract, respiratory, reproductive and urinary systems. Also highly expressed in brown adipose tissue, cardiomyocytes, enteric ganglia and glucagon producing cells of the pancreas. Expressed in germ cells of the testis and all regions of the brain.

The protein localises to the cytoplasm. It is found in the cytoskeleton. It localises to the cell cortex. Its subcellular location is the lysosome. The protein resides in the cytoplasmic vesicle. The protein localises to the cell membrane. It is found in the membrane. It localises to the clathrin-coated pit. May act as a link between RND2 signaling and regulation of the actin cytoskeleton. Required to coordinate membrane tubulation with reorganization of the actin cytoskeleton during the late stage of clathrin-mediated endocytosis. Binds to lipids such as phosphatidylinositol 4,5-bisphosphate and phosphatidylserine and promotes membrane invagination and the formation of tubules. Also enhances actin polymerization via the recruitment of WASL/N-WASP, which in turn activates the Arp2/3 complex. Actin polymerization may promote the fission of membrane tubules to form endocytic vesicles. May be required for the lysosomal retention of FASLG/FASL. In Homo sapiens (Human), this protein is Formin-binding protein 1 (FNBP1).